Here is a 391-residue protein sequence, read N- to C-terminus: Nutrient and stress factor 1 (391 aa).

Polar residues predominate over residues 1 to 27 (MENTTNRNTAGVLTSSNGNFATNSVAA). The segment at 1 to 37 (MENTTNRNTAGVLTSSNGNFATNSVAASTPKRSKSAR) is disordered. C2H2-type zinc fingers lie at residues 41-66 (FKCT…IRKH) and 72-95 (FQCP…ESVH). The disordered stretch occupies residues 91–149 (RESVHAHKNHHSTSSHQRKPSSSSLSSSSSASSSSSASSSTSYSDPYRKTNINSGNMPM). Positions 96–109 (AHKNHHSTSSHQRK) are enriched in basic residues. Residues 110 to 134 (PSSSSLSSSSSASSSSSASSSTSYS) are compositionally biased toward low complexity. Residues Ser-162 and Ser-163 each carry the phosphoserine modification. The interval 326 to 374 (AFSQPPNGNKNNNMSSSKNGGKGGENFKNTDDRNDNNNKKRSETLSESD) is disordered. Residues 332 to 344 (NGNKNNNMSSSKN) show a composition bias toward low complexity. The segment covering 353 to 369 (KNTDDRNDNNNKKRSET) has biased composition (basic and acidic residues).

Its subcellular location is the nucleus. Functionally, transcription factor that participates in the transcriptional activation of glucose-repressed genes during exponential growth in non-fermentable carbon conditions. Also involved in salt-stress response. In Saccharomyces cerevisiae (strain ATCC 204508 / S288c) (Baker's yeast), this protein is Nutrient and stress factor 1 (USV1).